We begin with the raw amino-acid sequence, 402 residues long: Sulfate adenylyltransferase (402 aa).

The protein belongs to the sulfate adenylyltransferase family.

The enzyme catalyses sulfate + ATP + H(+) = adenosine 5'-phosphosulfate + diphosphate. It participates in sulfur metabolism; hydrogen sulfide biosynthesis; sulfite from sulfate: step 1/3. This Vesicomyosocius okutanii subsp. Calyptogena okutanii (strain HA) protein is Sulfate adenylyltransferase.